Reading from the N-terminus, the 309-residue chain is Pantothenate synthetase (309 aa).

T2 is subject to N-acetylthreonine. 40 to 47 (MGALHEGH) provides a ligand contact to ATP. H47 serves as the catalytic Proton donor. Q72 contributes to the (R)-pantoate binding site. A beta-alanine-binding site is contributed by Q72. Mg(2+) is bound by residues D88, D89, and Q92. 158–161 (GEKD) contributes to the ATP binding site. (R)-pantoate is bound at residue Q164. ATP contacts are provided by residues V187 and 195-198 (MSSR).

It belongs to the pantothenate synthetase family.

Its subcellular location is the cytoplasm. The enzyme catalyses (R)-pantoate + beta-alanine + ATP = (R)-pantothenate + AMP + diphosphate + H(+). The protein operates within cofactor biosynthesis; (R)-pantothenate biosynthesis; (R)-pantothenate from (R)-pantoate and beta-alanine: step 1/1. Pantothenate exhibits uncompetitive inhibition toward both D-pantoate and ATP, and non-competitive inhibition toward beta-alanine. AMPCPP exhibits competitive inhibition toward ATP, uncompetitive inhibition toward beta-alanine, and non-competitive inhibition toward D-pantoate. The enzyme is most active in the presence of magnesium or manganese. Other divalent cations (cobalt, nickel, zinc) are less effective. Its function is as follows. Catalyzes the condensation of pantoate with beta-alanine in an ATP-dependent reaction via a pantoyl-adenylate intermediate. This is Pantothenate synthetase (panC) from Mycobacterium tuberculosis (strain ATCC 25618 / H37Rv).